The chain runs to 539 residues: Protein TIC 55, chloroplastic (539 aa).

A chloroplast-targeting transit peptide spans 1–50 (MAVPFLSSSLQLTPTSPILFTKVTPTPIIHNHRSTCTIPTKPRLRLLRRS). Alanine 51 carries the post-translational modification N-acetylalanine. Topologically, residues 51–482 (AVAGTAVSDQ…VIKSFELWKN (432 aa)) are stromal. The Rieske domain occupies 88–193 (WYPLYLTKNV…VKDSQGVVWV (106 aa)). 4 residues coordinate [2Fe-2S] cluster: cysteine 129, histidine 131, cysteine 148, and histidine 151. Histidine 242 and histidine 247 together coordinate Fe cation. Residues 467-470 (CRSC) carry the Redox-active motif motif. The chain crosses the membrane as a helical span at residues 483 to 500 (ILSATAVALTALAILVVS). Topologically, residues 501-504 (RQWK) are chloroplast intermembrane. The chain crosses the membrane as a helical span at residues 505–527 (AVLLGSAALCSAAAYTCLRAINL). Over 528-539 (NTNNFIRTHRRL) the chain is Stromal.

Part of the Tic complex. Interacts with TIC62 and TIC110. The cofactor is [2Fe-2S] cluster. In terms of tissue distribution, highly expressed in green tissues and very low levels in non-photosynthetic tissues such as roots and etiolated seedlings.

It localises to the plastid. It is found in the chloroplast inner membrane. Its function is as follows. Involved in protein precursor import into chloroplasts. Part of the redox regulon consisting of TIC32, TIC 55 and TIC62. The polypeptide is Protein TIC 55, chloroplastic (TIC55) (Arabidopsis thaliana (Mouse-ear cress)).